We begin with the raw amino-acid sequence, 422 residues long: GTPase Obg (422 aa).

The Obg domain maps to 1 to 158 (MFYDRAKIYV…LWLELELKVI (158 aa)). The region spanning 159–330 (ADVGLIGFPN…VIHRVAELLA (172 aa)) is the OBG-type G domain. Residues 165 to 172 (GFPNAGKS), 190 to 194 (FTTLV), 212 to 215 (DIPG), 282 to 285 (NKMD), and 311 to 313 (SAA) each bind GTP. Mg(2+)-binding residues include serine 172 and threonine 192. The 79-residue stretch at 344 to 422 (VMFEPEERFN…IGDWEFEWSE (79 aa)) folds into the OCT domain.

Belongs to the TRAFAC class OBG-HflX-like GTPase superfamily. OBG GTPase family. Monomer. Requires Mg(2+) as cofactor.

Its subcellular location is the cytoplasm. Its function is as follows. An essential GTPase which binds GTP, GDP and possibly (p)ppGpp with moderate affinity, with high nucleotide exchange rates and a fairly low GTP hydrolysis rate. Plays a role in control of the cell cycle, stress response, ribosome biogenesis and in those bacteria that undergo differentiation, in morphogenesis control. The chain is GTPase Obg from Desulforamulus reducens (strain ATCC BAA-1160 / DSM 100696 / MI-1) (Desulfotomaculum reducens).